A 433-amino-acid chain; its full sequence is 3-phosphoshikimate 1-carboxyvinyltransferase (433 aa).

Positions 23, 24, and 28 each coordinate 3-phosphoshikimate. Residue lysine 23 participates in phosphoenolpyruvate binding. Phosphoenolpyruvate is bound by residues glycine 93 and arginine 121. 3-phosphoshikimate contacts are provided by serine 167, glutamine 169, aspartate 318, and lysine 345. Glutamine 169 lines the phosphoenolpyruvate pocket. The active-site Proton acceptor is aspartate 318. Phosphoenolpyruvate is bound by residues arginine 349 and arginine 390.

This sequence belongs to the EPSP synthase family. Monomer.

It localises to the cytoplasm. It carries out the reaction 3-phosphoshikimate + phosphoenolpyruvate = 5-O-(1-carboxyvinyl)-3-phosphoshikimate + phosphate. The protein operates within metabolic intermediate biosynthesis; chorismate biosynthesis; chorismate from D-erythrose 4-phosphate and phosphoenolpyruvate: step 6/7. Catalyzes the transfer of the enolpyruvyl moiety of phosphoenolpyruvate (PEP) to the 5-hydroxyl of shikimate-3-phosphate (S3P) to produce enolpyruvyl shikimate-3-phosphate and inorganic phosphate. This Nitratiruptor sp. (strain SB155-2) protein is 3-phosphoshikimate 1-carboxyvinyltransferase.